We begin with the raw amino-acid sequence, 330 residues long: Phosphate acyltransferase (330 aa).

This sequence belongs to the PlsX family. Homodimer. Probably interacts with PlsY.

It localises to the cytoplasm. The enzyme catalyses a fatty acyl-[ACP] + phosphate = an acyl phosphate + holo-[ACP]. It participates in lipid metabolism; phospholipid metabolism. In terms of biological role, catalyzes the reversible formation of acyl-phosphate (acyl-PO(4)) from acyl-[acyl-carrier-protein] (acyl-ACP). This enzyme utilizes acyl-ACP as fatty acyl donor, but not acyl-CoA. The protein is Phosphate acyltransferase of Bacillus cereus (strain B4264).